We begin with the raw amino-acid sequence, 433 residues long: GPI mannosyltransferase 2 (433 aa).

Position 1 (methionine 1) is a topological domain, cytoplasmic. A helical transmembrane segment spans residues 2–22 (IVGLTLYFVLFRSIQYLLVFL). Topologically, residues 23–109 (TPIRQFDTST…NNDSIYHALR (87 aa)) are lumenal. Asparagine 69 and asparagine 101 each carry an N-linked (GlcNAc...) asparagine glycan. Residues 110–130 (VGVAIENVLFYLSGIVLYFLT) traverse the membrane as a helical segment. At 131-161 (KKIFSQNIRQSQFARTIAKKTSLLFFLTSAA) the chain is on the cytoplasmic side. A helical membrane pass occupies residues 162 to 182 (GFLTSIYSEPLSFFFAFVGIW). The Lumenal segment spans residues 183 to 215 (SRECSISVPVLGQFDISWRYWFPYSFISMACFT). The helical transmembrane segment at 216–236 (LASLNRSNCVLLGIYFIFDLI) threads the bilayer. The Cytoplasmic segment spans residues 237–243 (ELTKNRK). Residues 244-264 (FVKAICFPLLSGSLMFSALLY) traverse the membrane as a helical segment. The Lumenal segment spans residues 265–318 (QQYYLPYKTFCPQRGEWCKSQLFSSIFITKTSLYSYIQSHYWGVGLLKYWTPNN). Residues 319-339 (IPNFLFAVPNIIILIYSSIYF) form a helical membrane-spanning segment. Residues 340 to 350 (SKIYPSYNLKA) lie on the Cytoplasmic side of the membrane. Residues 351–371 (LVWITRALVVIVCFFAHVQIL) form a helical membrane-spanning segment. The Lumenal segment spans residues 372–409 (NRIASFLPLHLWYLADRLVKTSDPKKMENPKGDDKIVK). A helical membrane pass occupies residues 410–430 (FYIYWLAFWIPLQTILFAAFL). Topologically, residues 431-433 (PPA) are cytoplasmic.

This sequence belongs to the PIGV family. In terms of assembly, part of the GPI mannosyltransferase 2 complex composed of GPI18 and PGA1.

It is found in the endoplasmic reticulum membrane. It functions in the pathway glycolipid biosynthesis; glycosylphosphatidylinositol-anchor biosynthesis. In terms of biological role, mannosyltransferase involved in glycosylphosphatidylinositol-anchor biosynthesis. Responsible for the transfer of the second mannose to the glycosylphosphatidylinositol during GPI precursor assembly. This is GPI mannosyltransferase 2 (GPI18) from Saccharomyces cerevisiae (strain ATCC 204508 / S288c) (Baker's yeast).